Here is a 137-residue protein sequence, read N- to C-terminus: Proofreading thioesterase EntH (137 aa).

Residue Glu63 is the Nucleophile or proton acceptor of the active site.

This sequence belongs to the thioesterase PaaI family. In terms of assembly, homotetramer. Dimer of dimers. Interacts specifically with the aryl carrier protein (ArCP) domain of EntB.

Its subcellular location is the cytoplasm. Its pathway is siderophore biosynthesis; enterobactin biosynthesis. Required for optimal enterobactin synthesis. Acts as a proofreading enzyme that prevents EntB misacylation by hydrolyzing the thioester bound existing between EntB and wrongly charged molecules. This is Proofreading thioesterase EntH from Salmonella paratyphi B (strain ATCC BAA-1250 / SPB7).